The following is a 497-amino-acid chain: Glycerol kinase (497 aa).

Thr-12 lines the ADP pocket. ATP is bound by residues Thr-12, Thr-13, and Ser-14. Thr-12 is a binding site for sn-glycerol 3-phosphate. Arg-16 contacts ADP. Sn-glycerol 3-phosphate is bound by residues Arg-82, Glu-83, Tyr-134, and Asp-243. Glycerol-binding residues include Arg-82, Glu-83, Tyr-134, Asp-243, and Gln-244. The ADP site is built by Thr-265 and Gly-308. The ATP site is built by Thr-265, Gly-308, Gln-312, and Gly-411. Residue Gly-411 coordinates ADP.

It belongs to the FGGY kinase family.

The enzyme catalyses glycerol + ATP = sn-glycerol 3-phosphate + ADP + H(+). It functions in the pathway polyol metabolism; glycerol degradation via glycerol kinase pathway; sn-glycerol 3-phosphate from glycerol: step 1/1. Inhibited by fructose 1,6-bisphosphate (FBP). Functionally, key enzyme in the regulation of glycerol uptake and metabolism. Catalyzes the phosphorylation of glycerol to yield sn-glycerol 3-phosphate. The sequence is that of Glycerol kinase from Xanthobacter autotrophicus (strain ATCC BAA-1158 / Py2).